Reading from the N-terminus, the 312-residue chain is Ribosomal RNA small subunit methyltransferase H (312 aa).

Residues 33-35 (GGH), Asp-53, Phe-80, Asp-101, and Gln-108 contribute to the S-adenosyl-L-methionine site.

The protein belongs to the methyltransferase superfamily. RsmH family.

It localises to the cytoplasm. The catalysed reaction is cytidine(1402) in 16S rRNA + S-adenosyl-L-methionine = N(4)-methylcytidine(1402) in 16S rRNA + S-adenosyl-L-homocysteine + H(+). Specifically methylates the N4 position of cytidine in position 1402 (C1402) of 16S rRNA. The polypeptide is Ribosomal RNA small subunit methyltransferase H (Desulfosudis oleivorans (strain DSM 6200 / JCM 39069 / Hxd3) (Desulfococcus oleovorans)).